A 160-amino-acid chain; its full sequence is Heme transporter hrg-5 (160 aa).

A helical membrane pass occupies residues 21 to 41; it reads IALTILDILIGFSNILSYAIQ. N-linked (GlcNAc...) asparagine glycosylation is present at N44. Helical transmembrane passes span 47–67, 89–109, and 123–142; these read ALTL…MFLA, ITLG…AGVT, and FTGL…ALLA. N-linked (GlcNAc...) asparagine glycosylation is present at N144.

This sequence belongs to the HRG family.

Its subcellular location is the membrane. Functionally, heme transporter. The sequence is that of Heme transporter hrg-5 (hrg-5) from Caenorhabditis elegans.